We begin with the raw amino-acid sequence, 263 residues long: Aminoglycoside (3'') (9) adenylyltransferase (263 aa).

The catalysed reaction is streptomycin + ATP = 3''-O-adenylylstreptomycin + diphosphate. The enzyme catalyses spectinomycin + ATP = 9-O-adenylylspectinomycin + diphosphate. Functionally, mediates bacterial resistance to the antibiotics streptomycin and spectinomycin. The polypeptide is Aminoglycoside (3'') (9) adenylyltransferase (Escherichia coli).